Consider the following 240-residue polypeptide: Uridylate kinase (240 aa).

An ATP-binding site is contributed by 12-15 (KLSG). Residues 20 to 25 (GEKGFG) form an involved in allosteric activation by GTP region. Gly-54 serves as a coordination point for UMP. Gly-55 and Arg-59 together coordinate ATP. UMP-binding positions include Asp-74 and 135 to 142 (TGSPYFST). ATP is bound by residues Asn-163, Tyr-169, and Asp-172.

It belongs to the UMP kinase family. Homohexamer.

The protein localises to the cytoplasm. The enzyme catalyses UMP + ATP = UDP + ADP. It participates in pyrimidine metabolism; CTP biosynthesis via de novo pathway; UDP from UMP (UMPK route): step 1/1. Allosterically activated by GTP. Inhibited by UTP. In terms of biological role, catalyzes the reversible phosphorylation of UMP to UDP. The protein is Uridylate kinase of Limosilactobacillus reuteri (Lactobacillus reuteri).